The following is an 855-amino-acid chain: Potassium transporter 13 (855 aa).

The segment at 1 to 67 (MFHVEEESSG…EMDSDEEDDN (67 aa)) is disordered. The Cytoplasmic segment spans residues 1 to 105 (MFHVEEESSG…EIEDTGIGKK (105 aa)). A compositionally biased stretch (acidic residues) spans 36–51 (EKDDYEVNEDYDDDGY). The helical transmembrane segment at 106–126 (LILALQTLGVVFGDIGTSPLY) threads the bilayer. At 127–142 (TFTVMFRRSPINDKED) the chain is on the extracellular side. A helical membrane pass occupies residues 143–163 (IIGALSLVIYTLILIPLVKYV). Over 164–233 (HFVLWANDDG…RLEASMALKK (70 aa)) the chain is Cytoplasmic. A helical transmembrane segment spans residues 234–254 (LLLILVLAGTAMVIADAVVTP). Residues 255–268 (AMSVMSAIGGLKVG) are Extracellular-facing. Residues 269–289 (VGVIEQDQVVVISVSFLVILF) traverse the membrane as a helical segment. Over 290 to 298 (SVQKYGTSK) the chain is Cytoplasmic. A helical membrane pass occupies residues 299 to 319 (LGLVLGPALLLWFFCLAGIGI). The Extracellular segment spans residues 320-346 (YNLVKYDSSVFKAFNPAYIYFFFKRNS). A helical transmembrane segment spans residues 347–367 (VNAWYALGGCVLCATGSEAMF). Residues 368–379 (ADLSYFSVHSIQ) lie on the Cytoplasmic side of the membrane. A helical transmembrane segment spans residues 380-400 (LTFILLVLPCLLLGYLGQAAY). At 401-415 (LSENFSAAGDAFFSS) the chain is on the extracellular side. Asparagine 404 is a glycosylation site (N-linked (GlcNAc...) asparagine). The chain crosses the membrane as a helical span at residues 416-436 (VPSSLFWPVFLISNVAALIAS). Over 437–467 (RAMTTATFTCIKQSIALGCFPRLKIIHTSKK) the chain is Cytoplasmic. Residues 468-488 (FIGQIYIPVLNWSLLVVCLIV) traverse the membrane as a helical segment. Residues 489–503 (VCSTSNIFAIGNAYG) are Extracellular-facing. Residues 504-524 (IAELGIMMTTTILVTLIMLLI) traverse the membrane as a helical segment. At 525–528 (WQTN) the chain is on the cytoplasmic side. The chain crosses the membrane as a helical span at residues 529-549 (IIVVSMFAIVSLIVELVFFSS). The Extracellular segment spans residues 550-553 (VCSS). A helical transmembrane segment spans residues 554–574 (VADGSWIILVFATIMFLIMFV). Topologically, residues 575-855 (WNYGSKLKYE…LMQVGMTYMV (281 aa)) are cytoplasmic. Serine 766 carries the phosphoserine modification.

Belongs to the HAK/KUP transporter (TC 2.A.72.3) family.

The protein resides in the cell membrane. Functionally, probable potassium transporter. This chain is Potassium transporter 13 (POT13), found in Arabidopsis thaliana (Mouse-ear cress).